The following is a 416-amino-acid chain: Cytochrome P450 monooxygenase PikC (416 aa).

Residues Glu-94, 187 to 191 (AQTAM), and 238 to 246 (HILLVAGHE) each bind substrate. Cys-354 is a heme binding site.

The protein belongs to the cytochrome P450 family. It depends on heme as a cofactor.

The enzyme catalyses narbomycin + 2 reduced [2Fe-2S]-[ferredoxin] + O2 + 2 H(+) = pikromycin + 2 oxidized [2Fe-2S]-[ferredoxin] + H2O. It carries out the reaction narbomycin + 2 reduced [2Fe-2S]-[ferredoxin] + O2 + 2 H(+) = neopikromycin + 2 oxidized [2Fe-2S]-[ferredoxin] + H2O. It catalyses the reaction narbomycin + 4 reduced [2Fe-2S]-[ferredoxin] + 2 O2 + 4 H(+) = novapikromycin + 4 oxidized [2Fe-2S]-[ferredoxin] + 2 H2O. The catalysed reaction is 10-deoxymethymycin + 2 reduced [2Fe-2S]-[ferredoxin] + O2 + 2 H(+) = methymycin + 2 oxidized [2Fe-2S]-[ferredoxin] + H2O. The enzyme catalyses 10-deoxymethymycin + 2 reduced [2Fe-2S]-[ferredoxin] + O2 + 2 H(+) = neomethymycin + 2 oxidized [2Fe-2S]-[ferredoxin] + H2O. It carries out the reaction 10-deoxymethymycin + 4 reduced [2Fe-2S]-[ferredoxin] + 2 O2 + 4 H(+) = novamethymycin + 4 oxidized [2Fe-2S]-[ferredoxin] + 2 H2O. Its pathway is antibiotic biosynthesis. Catalyzes the hydroxylation of narbomycin to give rise to pikromycin, and of 10-deoxymethymycin (YC-17) to give rise to methymycin and neomethymycin during macrolide antibiotic biosynthesis. In addition, produces low amounts of neopicromycin, novapikromycin and novamethymycin. Requires the participation of a ferredoxin and a ferredoxin reductase for the transfer of electrons from NADPH to the monooxygenase. In Streptomyces venezuelae, this protein is Cytochrome P450 monooxygenase PikC.